A 230-amino-acid chain; its full sequence is Probable caffeoyl-CoA O-methyltransferase 1 (230 aa).

Residues Thr-52, Asp-74, 76–77 (GV), Ser-82, Asp-100, Ala-129, Asp-151, Asp-153, and Tyr-160 each bind S-adenosyl-L-methionine. Asp-151 contacts a divalent metal cation. 2 residues coordinate a divalent metal cation: Asp-177 and Asn-178.

The protein belongs to the class I-like SAM-binding methyltransferase superfamily. Cation-dependent O-methyltransferase family. CCoAMT subfamily.

It carries out the reaction (E)-caffeoyl-CoA + S-adenosyl-L-methionine = (E)-feruloyl-CoA + S-adenosyl-L-homocysteine + H(+). The sequence is that of Probable caffeoyl-CoA O-methyltransferase 1 (omt5) from Dictyostelium discoideum (Social amoeba).